The sequence spans 544 residues: Major royal jelly protein 3 (544 aa).

The first 20 residues, 1–20 (MTKWLLLVVCLGIACQDVTS), serve as a signal peptide directing secretion. N-linked (GlcNAc...) asparagine glycosylation is present at Asn183. The disordered stretch occupies residues 421-544 (RYHNQNAGNQ…NQVHHSSKLH (124 aa)). 20 tandem repeats follow at residues 424-428 (NQNAG), 429-433 (NQNAD), 434-438 (NQNAD), 439-443 (NQNAN), 444-448 (NQNAD), 449-453 (NQNAN), 454-458 (KQNGN), 459-463 (RQNDN), 464-468 (RQNDN), 469-473 (KQNGN), 474-478 (RQNDN), 479-483 (KQNGN), 484-488 (RQNDN), 489-493 (KQNGN), 494-498 (RQNGN), 499-503 (KQNDN), 504-508 (KQNGN), 509-513 (RQNDN), 514-518 (KRNGN), and 519-523 (RQNDN). Low complexity-rich tracts occupy residues 424 to 460 (NQNA…GNRQ), 468 to 510 (NKQN…GNRQ), and 518 to 530 (NRQN…QNDN). The interval 424–523 (NQNAGNQNAD…KRNGNRQNDN (100 aa)) is 23 X 5 AA tandem repeats of [NKR]-[RQ]-N-[AGD]-[DNG]. Residues 524–525 (QN) form a 21; half-length repeat. Repeat copies occupy residues 526–530 (NQNDN) and 531–535 (NRNDN).

The protein belongs to the major royal jelly protein family. As to quaternary structure, homoligomer; in the absence of RNA, assembles into a higher-order oligomeric form, composed of around 20 monomer units. Found in and secreted from the hypopharyngeal glands of the worker honey bee (at protein level); expression peaks at 12 days post eclosion. Expressed in the brains of worker bees. Expressed in the brains of adult worker bees peaking at 12 days post eclosion (at protein level). Expressed in the spermatheca of adult queen bees (at protein level); Expression levels are higher in mated queens than in virgin queens. Expressed in queen bee ovaries and male drone testes. Expression in the head of forager worker bees is lower than in the heads of nurse worker bees.

Its subcellular location is the secreted. Abundant protein component of royal jelly, a substance produced in the hypopharyngeal gland containing proteins, free amino acids, fatty acids, sugars and other nutrients, which is fed to developing larvae by worker nurse bees. Major royal jelly proteins (MRJPs) are high in essential amino acids and probably have a nutritional function in larval food. All larvae are fed some royal jelly (also known as worker jelly) early in their development but it forms the principal source of nutrition for larvae destined to become queen bees. Secreted RNA-binding protein required to concentrate, stabilize and enhance environmental RNA bioavailability in the honey bee royal jelly. Acts as a RNA-aggregating protein: binds 18 nucleotides and longer single- and double-stranded RNA (ssRNA and dsRNA, respectively) in a non-specific manner. RNA-binding drives super-order assembly of oligomers into extracellular ribonucleoprotein granules that concentrate, protect and enhance RNA uptake granules, facilitating RNA transfer among bees. Produced in the spermatheca of adult queen bees, along with other major royal jelly proteins, where it may act as a nutrient supply for sperm stored by mated queens, or be involved in energy metabolism. The protein is Major royal jelly protein 3 of Apis mellifera (Honeybee).